We begin with the raw amino-acid sequence, 358 residues long: Alanine racemase (358 aa).

The Proton acceptor; specific for D-alanine role is filled by Lys-34. Lys-34 bears the N6-(pyridoxal phosphate)lysine mark. Arg-129 contributes to the substrate binding site. The active-site Proton acceptor; specific for L-alanine is Tyr-254. Met-302 provides a ligand contact to substrate.

Belongs to the alanine racemase family. Pyridoxal 5'-phosphate serves as cofactor.

The enzyme catalyses L-alanine = D-alanine. The protein operates within amino-acid biosynthesis; D-alanine biosynthesis; D-alanine from L-alanine: step 1/1. Functionally, catalyzes the interconversion of L-alanine and D-alanine. May also act on other amino acids. This Vibrio atlanticus (strain LGP32) (Vibrio splendidus (strain Mel32)) protein is Alanine racemase (alr).